The sequence spans 504 residues: Maturase K (504 aa).

Belongs to the intron maturase 2 family. MatK subfamily.

The protein localises to the plastid. Its subcellular location is the chloroplast. Functionally, usually encoded in the trnK tRNA gene intron. Probably assists in splicing its own and other chloroplast group II introns. The chain is Maturase K from Nepenthes distillatoria (Pitcher plant).